The sequence spans 447 residues: MIKIRRGLDLPINGKPNQSIEDGPQVRQVALIGFDYQGMKPTMAVKVGDRVKLGQELFADKKIEGVIYTSPASGVVSAIHRGDQRVFHSIVIDVEGDDALAFNQYAAADLAGLSAEQVQQNLVQSGLWTAFRTRPYSKSPTPGSKPHSIFVQAIDTNPLAADPAVIIAAKADAFANGLTLLARLTEGKVFVCQAEAANLPKGQGANIAYESFAGVHPAGNPGTHIHYLDPVSASKTVWTIGYQDVIAIGELFTTGRLNVERVVALAGPQVDRPRLVRTRLGANLDQLTQGQLKAGENRVISGSVFGGRRSFGNLTFLGRFHTQVSVLLEGREREMLHYLRAGFNKFSVMGIFISKLFPSKTFDFTTSTNGSERAMVPVGSYEKVMPLDILPTQLLRSLIVGDTETAQKLGCLELDEEDLALCTFVCPGKYEYGPILRNNLTRIENEG.

It belongs to the NqrA family. In terms of assembly, composed of six subunits; NqrA, NqrB, NqrC, NqrD, NqrE and NqrF.

It catalyses the reaction a ubiquinone + n Na(+)(in) + NADH + H(+) = a ubiquinol + n Na(+)(out) + NAD(+). Functionally, NQR complex catalyzes the reduction of ubiquinone-1 to ubiquinol by two successive reactions, coupled with the transport of Na(+) ions from the cytoplasm to the periplasm. NqrA to NqrE are probably involved in the second step, the conversion of ubisemiquinone to ubiquinol. In Cellvibrio japonicus (strain Ueda107) (Pseudomonas fluorescens subsp. cellulosa), this protein is Na(+)-translocating NADH-quinone reductase subunit A.